We begin with the raw amino-acid sequence, 218 residues long: Ribosomal RNA small subunit methyltransferase G (218 aa).

Residues glycine 86, leucine 91, 137-138 (AE), and arginine 153 contribute to the S-adenosyl-L-methionine site.

It belongs to the methyltransferase superfamily. RNA methyltransferase RsmG family.

It is found in the cytoplasm. The enzyme catalyses guanosine(527) in 16S rRNA + S-adenosyl-L-methionine = N(7)-methylguanosine(527) in 16S rRNA + S-adenosyl-L-homocysteine. Its function is as follows. Specifically methylates the N7 position of guanine in position 527 of 16S rRNA. This is Ribosomal RNA small subunit methyltransferase G from Nitratidesulfovibrio vulgaris (strain ATCC 29579 / DSM 644 / CCUG 34227 / NCIMB 8303 / VKM B-1760 / Hildenborough) (Desulfovibrio vulgaris).